The primary structure comprises 305 residues: UDP-3-O-acyl-N-acetylglucosamine deacetylase (305 aa).

Residues His79, His238, and Asp242 each coordinate Zn(2+). His265 acts as the Proton donor in catalysis.

It belongs to the LpxC family. Zn(2+) serves as cofactor.

It catalyses the reaction a UDP-3-O-[(3R)-3-hydroxyacyl]-N-acetyl-alpha-D-glucosamine + H2O = a UDP-3-O-[(3R)-3-hydroxyacyl]-alpha-D-glucosamine + acetate. The protein operates within glycolipid biosynthesis; lipid IV(A) biosynthesis; lipid IV(A) from (3R)-3-hydroxytetradecanoyl-[acyl-carrier-protein] and UDP-N-acetyl-alpha-D-glucosamine: step 2/6. In terms of biological role, catalyzes the hydrolysis of UDP-3-O-myristoyl-N-acetylglucosamine to form UDP-3-O-myristoylglucosamine and acetate, the committed step in lipid A biosynthesis. This is UDP-3-O-acyl-N-acetylglucosamine deacetylase from Proteus mirabilis (strain HI4320).